Consider the following 278-residue polypeptide: Undecaprenyl-diphosphatase (278 aa).

8 helical membrane-spanning segments follow: residues 3 to 23 (YILI…IPIS), 42 to 62 (VAYS…IFYF), 88 to 108 (FLVI…LFVI), 112 to 132 (ILGL…IVIY), 152 to 172 (IIIV…RSGM), 190 to 210 (LSFI…VLFS), 225 to 245 (GLLI…NALL), and 253 to 273 (VVLL…LSDI).

Belongs to the UppP family.

The protein localises to the cell membrane. It carries out the reaction di-trans,octa-cis-undecaprenyl diphosphate + H2O = di-trans,octa-cis-undecaprenyl phosphate + phosphate + H(+). Functionally, catalyzes the dephosphorylation of undecaprenyl diphosphate (UPP). In Saccharolobus solfataricus (strain ATCC 35092 / DSM 1617 / JCM 11322 / P2) (Sulfolobus solfataricus), this protein is Undecaprenyl-diphosphatase.